The sequence spans 35 residues: Putative neurotoxin (35 aa).

The LCN-type CS-alpha/beta domain maps to 1-35; sequence KEGYPKNSEGCKITCLFNDPYCKGLCINLSTQADY.

Expressed by the venom gland.

It is found in the secreted. In terms of biological role, causes paralysis and death in insects (A.domestica). The sequence is that of Putative neurotoxin from Rhopalurus junceus (Caribbean blue scorpion).